We begin with the raw amino-acid sequence, 955 residues long: MMATSQDYFGNPYALFRGPPTTLRPRESPLGVGHPHGHGHLHSHAHAHGHGHAHSHYAALDLQTPHKRNIETDVRAPPPPLPPPPLPLPPASPRYNTDQGAMDQQFCLRWNNHPTNLTGVLTSLLQREALCDVTLACEGETVKAHQTILSACSPYFETIFLQNQHPHPIIYLKDVRYSEMRSLLDFMYKGEVNVGQSSLPMFLKTAESLQVRGLTDNNNLNYRSDCDKLRDSAASSPTGRGPSNYTGGLGGAGGVADAMRESRDSLRSRCERDLRDELTQRSSSSMSERSSAAAAAAAAAAAVAAAGGNVNAAAVALGLTTPTGGERSPSVGSASAAAAAAAVAAAVAAAANRSASADGCSDRGSERGTLERTDSRDDLLQLDYSNKDNNNSNSSSTGGNNNNNNNNNNNSSSNNNNSSSNRERNNSGERERERERERERDRDRELSTTPVEQLSSSKRRRKNSSSNCDNSLSSSHQDRHYPQDSQANFKSSPVPKTGGSTSESEDAGGRHDSPLSMTTSVHLGGGGGNVGAASALSGLSQSLSIKQELMDAQQQQQHREHHVALPPDYLPSAALKLHAEDMSTLLTQHALQAADARDEHNDAKQLQLDQTDNIDGRVKCFNIKHDRHPDRELDRNHREHDDDPGVIEEVVVDHVREMEAGNEHDPEEMKEAAYHATPPKYRRAVVYAPPHPDEEAASGSGSDIYVDGGYNCEYKCKELNMRAIRCSRQQHMMSHYSPHHPHHRSLIDCPAEAAYSPPVANNQAYLASNGAVQQLDLSTYHGHANHQLHQHPPSATHPSHSQSSPHYPSASGAGAGAGSVSVSIAGSASGSATSAPASVATSAVSPQPSSSSTGSTSSAAAVAAAAAAAANRRDHNIDYSTLFVQLSGTLPTLYRCVSCNKIVSNRWHHANIHRPQSHECPVCGQKFTRRDNMKAHCKIKHADIKDRFFSHYVHM.

Disordered regions lie at residues 1-55 and 70-89; these read MMAT…HAHS and IETD…LPLP. Positions 35 to 55 are enriched in basic residues; sequence PHGHGHLHSHAHAHGHGHAHS. Over residues 76-89 the composition is skewed to pro residues; that stretch reads APPPPLPPPPLPLP. Positions 131 to 196 constitute a BTB domain; that stretch reads CDVTLACEGE…MYKGEVNVGQ (66 aa). 3 disordered regions span residues 229–288, 352–526, and 784–814; these read LRDS…SMSE, NRSA…LGGG, and ANHQ…SGAG. Residues 233 to 246 are compositionally biased toward polar residues; it reads AASSPTGRGPSNYT. Basic and acidic residues-rich tracts occupy residues 258–279 and 360–379; these read AMRE…DELT and CSDR…RDDL. Low complexity predominate over residues 387–420; that stretch reads KDNNNSNSSSTGGNNNNNNNNNNNSSSNNNNSSS. Residues 421–446 are compositionally biased toward basic and acidic residues; the sequence is NRERNNSGERERERERERERDRDREL. 2 stretches are compositionally biased toward low complexity: residues 464-475 and 790-814; these read SSSNCDNSLSSS and QHPP…SGAG. A C2H2-type zinc finger spans residues 918 to 941; the sequence is HECPVCGQKFTRRDNMKAHCKIKH.

In terms of tissue distribution, expressed in parts of the adult male brain associated with the courtship song and steps of the male courtship. Also expressed in the larval and pupal male mushroom body and optic lobe. Expressed in pupal female optic lobe.

The protein resides in the nucleus. In terms of biological role, probably acts as a transcriptional regulator. Part of the somatic sex determination hierarchy; sex determination genes transformer (tra) and transformer-2 (tra-2) switch fru splicing from the male-specific pattern to the female-specific pattern through activation of the female-specific fru 5'-splice site. Vital for the development of males and females. Controls the development of the male specific abdominal muscle of Lawrence. Plays a role in male courtship behavior and sexual orientation. Enhances male-specific expression of takeout in brain-associated fat body. The chain is Sex determination protein fruitless (fru) from Drosophila melanogaster (Fruit fly).